A 479-amino-acid polypeptide reads, in one-letter code: Aspartyl/glutamyl-tRNA(Asn/Gln) amidotransferase subunit B (479 aa).

It belongs to the GatB/GatE family. GatB subfamily. In terms of assembly, heterotrimer of A, B and C subunits.

It carries out the reaction L-glutamyl-tRNA(Gln) + L-glutamine + ATP + H2O = L-glutaminyl-tRNA(Gln) + L-glutamate + ADP + phosphate + H(+). The catalysed reaction is L-aspartyl-tRNA(Asn) + L-glutamine + ATP + H2O = L-asparaginyl-tRNA(Asn) + L-glutamate + ADP + phosphate + 2 H(+). Allows the formation of correctly charged Asn-tRNA(Asn) or Gln-tRNA(Gln) through the transamidation of misacylated Asp-tRNA(Asn) or Glu-tRNA(Gln) in organisms which lack either or both of asparaginyl-tRNA or glutaminyl-tRNA synthetases. The reaction takes place in the presence of glutamine and ATP through an activated phospho-Asp-tRNA(Asn) or phospho-Glu-tRNA(Gln). In Streptococcus pyogenes serotype M49 (strain NZ131), this protein is Aspartyl/glutamyl-tRNA(Asn/Gln) amidotransferase subunit B.